We begin with the raw amino-acid sequence, 681 residues long: DNA ligase (681 aa).

NAD(+)-binding positions include 34–38, 83–84, and E115; these read DAEYD and SL. K117 serves as the catalytic N6-AMP-lysine intermediate. R138, E185, K301, and K325 together coordinate NAD(+). Zn(2+)-binding residues include C419, C422, C437, and C443. The 80-residue stretch at 602 to 681 folds into the BRCT domain; the sequence is RKSDVLAGQT…AALLALIGER (80 aa).

It belongs to the NAD-dependent DNA ligase family. LigA subfamily. Mg(2+) is required as a cofactor. Requires Mn(2+) as cofactor.

The enzyme catalyses NAD(+) + (deoxyribonucleotide)n-3'-hydroxyl + 5'-phospho-(deoxyribonucleotide)m = (deoxyribonucleotide)n+m + AMP + beta-nicotinamide D-nucleotide.. In terms of biological role, DNA ligase that catalyzes the formation of phosphodiester linkages between 5'-phosphoryl and 3'-hydroxyl groups in double-stranded DNA using NAD as a coenzyme and as the energy source for the reaction. It is essential for DNA replication and repair of damaged DNA. The sequence is that of DNA ligase from Chloroflexus aggregans (strain MD-66 / DSM 9485).